Consider the following 443-residue polypeptide: ATP-dependent protease ATPase subunit HslU (443 aa).

ATP-binding positions include Val18, 60–65, Asp256, Glu321, and Arg393; that span reads GVGKTE.

Belongs to the ClpX chaperone family. HslU subfamily. As to quaternary structure, a double ring-shaped homohexamer of HslV is capped on each side by a ring-shaped HslU homohexamer. The assembly of the HslU/HslV complex is dependent on binding of ATP.

The protein resides in the cytoplasm. Its function is as follows. ATPase subunit of a proteasome-like degradation complex; this subunit has chaperone activity. The binding of ATP and its subsequent hydrolysis by HslU are essential for unfolding of protein substrates subsequently hydrolyzed by HslV. HslU recognizes the N-terminal part of its protein substrates and unfolds these before they are guided to HslV for hydrolysis. This Azoarcus sp. (strain BH72) protein is ATP-dependent protease ATPase subunit HslU.